Consider the following 190-residue polypeptide: FMRFamide-related peptides (190 aa).

The N-terminal stretch at 1–21 (MSCSRTVALLAALWLVVGATS) is a signal peptide. The propeptide occupies 22-33 (SPVRRSPDLEAR). Residue F45 is modified to Phenylalanine amide. A propeptide spanning residues 69–104 (GNSFLRFGRSQPLTLSTDDLVSLLRAYEEDYDTPMT) is cleaved from the precursor. F113 is modified (phenylalanine amide). The propeptide occupies 116–150 (DPNFIRLGRSADDDKSAFEQNSELVVSGYPQRKSR). Position 158 is a leucine amide (L158). A propeptide spanning residues 160–190 (RDSEEVNENEFEETEESRRKRSADSCHDCQS) is cleaved from the precursor. Residues 161 to 190 (DSEEVNENEFEETEESRRKRSADSCHDCQS) are disordered. The segment covering 164-174 (EVNENEFEETE) has biased composition (acidic residues). Basic and acidic residues predominate over residues 175-190 (ESRRKRSADSCHDCQS).

The protein belongs to the FARP (FMRFamide related peptide) family. As to expression, RFamide 1: Expressed in corpora cardiaca (CC), corpora allata (CA), antennal lobe (AL) and gnathal ganglion (GNG) (at protein level). Expression in AL detected in most animals, in CC, CA and in GNG in some animals (at protein level). RFamide precursor-related peptide 2: Expressed in corpora cardiaca (CC), corpora allata (CA), antennal lobe (AL) and gnathal ganglion (GNG) (at protein level). Expression in AL detected in some animals, expression in CC, CA and GNG in few animals (at protein level). RFamide 3: Expressed in corpora cardiaca (CC), corpora allata (CA), antennal lobe (AL) and gnathal ganglion (GNG) (at protein level). Expression in AL detected in all animals, in CC, CA and GNG in most animals (at protein level). RFamide 5: Expressed in corpora cardiaca (CC), corpora allata (CA), antennal lobe (AL) and gnathal ganglion (GNG) (at protein level). Expression in AL detected in all animals, in CC, CA and in GNG in some animals (at protein level).

Its subcellular location is the secreted. In insects, FMRFamide and related peptides have modulatory actions at skeletal neuromuscular junctions, and peptides that are immunologically related to FMRFamide are released into the circulation from neurohemal organs. This is FMRFamide-related peptides from Agrotis ipsilon (Black cutworm moth).